The sequence spans 1094 residues: Probable arabinosyltransferase C (1094 aa).

Transmembrane regions (helical) follow at residues 28–50 (IARY…TPLL), 232–251 (AAMI…LHIL), 264–286 (PARW…WWHF), 341–360 (SIWM…WVIS), 373–392 (TSRA…WLPL), 431–453 (IGAL…LVAI), 466–488 (RFGV…IPIF), 530–552 (SIAR…AMSL), 565–582 (SRRI…MMFT), 586–608 (WTHH…AVAV), 620–642 (TVFA…GWWY), 657–679 (WRWS…AAWF), and 700–722 (LAGI…EVVS). Positions 817 to 831 (GSEPGTEGGTTAAPG) are enriched in low complexity. The interval 817–836 (GSEPGTEGGTTAAPGINGSR) is disordered.

It belongs to the emb family.

It localises to the cell membrane. Functionally, arabinosyl transferase responsible for the polymerization of arabinose into the arabinan of arabinogalactan. This chain is Probable arabinosyltransferase C (embC), found in Mycobacterium bovis (strain ATCC BAA-935 / AF2122/97).